The sequence spans 150 residues: MAIYQIVEIGSEVLREKAVPVKEITPNIEKLLDNMLDTLYDANGVGLAAPQVGVSKRVVVIDVGEGPIELINPVIIAKEGEDLDDEGCLSIPGITGQVARAAKVKVEALNRQGELQVIEGEGLLARCLQHEIDHLEGILFVDKAKKTQRR.

Fe cation is bound by residues cysteine 88 and histidine 130. Residue glutamate 131 is part of the active site. Histidine 134 is a Fe cation binding site.

It belongs to the polypeptide deformylase family. Fe(2+) is required as a cofactor.

It catalyses the reaction N-terminal N-formyl-L-methionyl-[peptide] + H2O = N-terminal L-methionyl-[peptide] + formate. Removes the formyl group from the N-terminal Met of newly synthesized proteins. Requires at least a dipeptide for an efficient rate of reaction. N-terminal L-methionine is a prerequisite for activity but the enzyme has broad specificity at other positions. The chain is Peptide deformylase from Desulfitobacterium hafniense (strain Y51).